Consider the following 213-residue polypeptide: MKPYQRQFIEFALSKQVLKFGEFTLKSGRKSPYFFNAGLFNTGRDLALLGRFYAEALVDSGIEFDLLFGPAYKGIPIATTTAVALAEHHDRDLPYCFNRKEAKTHGEGGNLVGSPLQGRVMLVDDVITAGTAIRESMEIIQAQGAQLAGVLISLDRQERGRGEISAIQEVERDYGCQVISIITLKELIAYLEEKPEMAEYLASVRAYREAYGI.

K26 serves as a coordination point for 5-phospho-alpha-D-ribose 1-diphosphate. 34-35 (FF) is an orotate binding site. 5-phospho-alpha-D-ribose 1-diphosphate contacts are provided by residues 72-73 (YK), R99, K100, K103, H105, and 124-132 (DDVITAGTA). T128 and R156 together coordinate orotate.

Belongs to the purine/pyrimidine phosphoribosyltransferase family. PyrE subfamily. In terms of assembly, homodimer. Mg(2+) serves as cofactor.

It catalyses the reaction orotidine 5'-phosphate + diphosphate = orotate + 5-phospho-alpha-D-ribose 1-diphosphate. Its pathway is pyrimidine metabolism; UMP biosynthesis via de novo pathway; UMP from orotate: step 1/2. In terms of biological role, catalyzes the transfer of a ribosyl phosphate group from 5-phosphoribose 1-diphosphate to orotate, leading to the formation of orotidine monophosphate (OMP). This chain is Orotate phosphoribosyltransferase, found in Klebsiella pneumoniae (strain 342).